Reading from the N-terminus, the 205-residue chain is Holliday junction branch migration complex subunit RuvA (205 aa).

A domain I region spans residues 1 to 67 (MIGWLKGDVQ…ADNLQLFGFL (67 aa)). The tract at residues 68 to 146 (QLAERDLFRE…DSVASTGPER (79 aa)) is domain II. Residues 147–155 (NQLDPVAPD) form a flexible linker region. The interval 155–205 (DLIATLETLGFETHEIRDALQRLNGMGGPQDGDDDDAWLRACIKLMSSTDP) is domain III.

It belongs to the RuvA family. Homotetramer. Forms an RuvA(8)-RuvB(12)-Holliday junction (HJ) complex. HJ DNA is sandwiched between 2 RuvA tetramers; dsDNA enters through RuvA and exits via RuvB. An RuvB hexamer assembles on each DNA strand where it exits the tetramer. Each RuvB hexamer is contacted by two RuvA subunits (via domain III) on 2 adjacent RuvB subunits; this complex drives branch migration. In the full resolvosome a probable DNA-RuvA(4)-RuvB(12)-RuvC(2) complex forms which resolves the HJ.

It localises to the cytoplasm. Its function is as follows. The RuvA-RuvB-RuvC complex processes Holliday junction (HJ) DNA during genetic recombination and DNA repair, while the RuvA-RuvB complex plays an important role in the rescue of blocked DNA replication forks via replication fork reversal (RFR). RuvA specifically binds to HJ cruciform DNA, conferring on it an open structure. The RuvB hexamer acts as an ATP-dependent pump, pulling dsDNA into and through the RuvAB complex. HJ branch migration allows RuvC to scan DNA until it finds its consensus sequence, where it cleaves and resolves the cruciform DNA. In Parasynechococcus marenigrum (strain WH8102), this protein is Holliday junction branch migration complex subunit RuvA.